Reading from the N-terminus, the 225-residue chain is Enolase-phosphatase E1 (225 aa).

The protein belongs to the HAD-like hydrolase superfamily. MasA/MtnC family. In terms of assembly, monomer. The cofactor is Mg(2+).

The catalysed reaction is 5-methylsulfanyl-2,3-dioxopentyl phosphate + H2O = 1,2-dihydroxy-5-(methylsulfanyl)pent-1-en-3-one + phosphate. Its pathway is amino-acid biosynthesis; L-methionine biosynthesis via salvage pathway; L-methionine from S-methyl-5-thio-alpha-D-ribose 1-phosphate: step 3/6. The protein operates within amino-acid biosynthesis; L-methionine biosynthesis via salvage pathway; L-methionine from S-methyl-5-thio-alpha-D-ribose 1-phosphate: step 4/6. In terms of biological role, bifunctional enzyme that catalyzes the enolization of 2,3-diketo-5-methylthiopentyl-1-phosphate (DK-MTP-1-P) into the intermediate 2-hydroxy-3-keto-5-methylthiopentenyl-1-phosphate (HK-MTPenyl-1-P), which is then dephosphorylated to form the acireductone 1,2-dihydroxy-3-keto-5-methylthiopentene (DHK-MTPene). This Shewanella denitrificans (strain OS217 / ATCC BAA-1090 / DSM 15013) protein is Enolase-phosphatase E1.